The following is a 440-amino-acid chain: 23S rRNA (uracil(1939)-C(5))-methyltransferase RlmD (440 aa).

In terms of domain architecture, TRAM spans 6–64 (PIHNAQPEQVFIESLDTEGRGIARVEGKVLFVDGALPGERVWARRTQNHKSFDRAELLQ). [4Fe-4S] cluster is bound by residues C77, C83, C86, and C164. S-adenosyl-L-methionine-binding residues include Q273, F302, N307, E323, D351, and D372. The active-site Nucleophile is C397.

The protein belongs to the class I-like SAM-binding methyltransferase superfamily. RNA M5U methyltransferase family. RlmD subfamily.

The catalysed reaction is uridine(1939) in 23S rRNA + S-adenosyl-L-methionine = 5-methyluridine(1939) in 23S rRNA + S-adenosyl-L-homocysteine + H(+). In terms of biological role, catalyzes the formation of 5-methyl-uridine at position 1939 (m5U1939) in 23S rRNA. This is 23S rRNA (uracil(1939)-C(5))-methyltransferase RlmD from Acidithiobacillus ferrooxidans (strain ATCC 23270 / DSM 14882 / CIP 104768 / NCIMB 8455) (Ferrobacillus ferrooxidans (strain ATCC 23270)).